The primary structure comprises 702 residues: ATP-dependent RNA helicase DDX4 (702 aa).

The interval 22–228 (FEKDKYSSGA…YIPPPPPEDE (207 aa)) is disordered. Positions 29 to 46 (SGANGDTFNRTSASSDIG) are enriched in polar residues. 2 stretches are compositionally biased toward gly residues: residues 58 to 68 (GGFGRGKGFGN) and 125 to 137 (RGSF…GFGL). Polar residues-rich tracts occupy residues 141 to 150 (NSESDQDQGT) and 195 to 215 (SGKN…SQGP). A phosphoserine mark is found at serine 195 and serine 199. The segment at 201–220 (KSETEGGESSDSQGPKVTYI) is interaction with RANBP9. A Q motif motif is present at residues 261–289 (LTFEEANLCQTLNNNIAKAGYTKLTPVQK). The Helicase ATP-binding domain maps to 292–475 (IPIVLAGRDL…GDFLKSSYLF (184 aa)). 305–312 (AQTGSGKT) contributes to the ATP binding site. The short motif at 419–422 (DEAD) is the DEAD box element. The region spanning 503-648 (KLVEILRNIG…DVPAWLEEIA (146 aa)) is the Helicase C-terminal domain. Positions 681 to 693 (TLNTAGISSSQAP) are enriched in polar residues. The disordered stretch occupies residues 681–702 (TLNTAGISSSQAPNPVDDESWD). A Phosphoserine modification is found at serine 700.

The protein belongs to the DEAD box helicase family. DDX4/VASA subfamily. As to quaternary structure, found in a mRNP complex, at least composed of TDRD1, TDRD6, TDRD7 and DDX4. Interacts with RANBP9. Interacts with RANBP10. Interacts with PIWIL2 and MAEL. Interacts with BMAL1 and CLOCK. Interacts with Tex19.1 and, probably, Tex19.2. Interacts with RBM46. In terms of tissue distribution, testis-specific.

It is found in the cytoplasm. Its subcellular location is the perinuclear region. It carries out the reaction ATP + H2O = ADP + phosphate + H(+). In terms of biological role, ATP-dependent RNA helicase required during spermatogenesis to repress transposable elements and preventing their mobilization, which is essential for the germline integrity. Acts via the piRNA metabolic process, which mediates the repression of transposable elements during meiosis by forming complexes composed of piRNAs and Piwi proteins and governs the methylation and subsequent repression of transposons. Involved in the secondary piRNAs metabolic process, the production of piRNAs in fetal male germ cells through a ping-pong amplification cycle. Required for PIWIL2 slicing-triggered piRNA biogenesis: helicase activity enables utilization of one of the slice cleavage fragments generated by PIWIL2 and processing these pre-piRNAs into piRNAs. The protein is ATP-dependent RNA helicase DDX4 of Mus musculus (Mouse).